Here is an 87-residue protein sequence, read N- to C-terminus: Tachykinin-1 (87 aa).

Positions 1–22 (MIRVGLILCCIFIAGVFEASSA) are cleaved as a signal peptide. Residues 23–37 (DDMLTAHNLIKRSEV) constitute a propeptide that is removed on maturation. Met-49 carries the post-translational modification Methionine amide. Positions 52–87 (SEELTRRLIQHPGSMSETSKRGPPKKVSRRPYILKK) are excised as a propeptide. Positions 61–87 (QHPGSMSETSKRGPPKKVSRRPYILKK) are disordered. A compositionally biased stretch (basic residues) spans 73 to 87 (GPPKKVSRRPYILKK).

Belongs to the tachykinin family. In terms of tissue distribution, expressed in the posterior salivary gland and more specifically in the mucus-secreting gland cells.

The protein resides in the secreted. Functionally, tachykinins are active peptides which excite neurons, evoke behavioral responses, are potent vasodilators and secretagogues, and contract (directly or indirectly) many smooth muscles. This is Tachykinin-1 from Octopus vulgaris (Common octopus).